Reading from the N-terminus, the 184-residue chain is Peptide deformylase (184 aa).

The Fe cation site is built by cysteine 92 and histidine 134. The active site involves glutamate 135. Histidine 138 lines the Fe cation pocket.

It belongs to the polypeptide deformylase family. Fe(2+) serves as cofactor.

It catalyses the reaction N-terminal N-formyl-L-methionyl-[peptide] + H2O = N-terminal L-methionyl-[peptide] + formate. Functionally, removes the formyl group from the N-terminal Met of newly synthesized proteins. Requires at least a dipeptide for an efficient rate of reaction. N-terminal L-methionine is a prerequisite for activity but the enzyme has broad specificity at other positions. The sequence is that of Peptide deformylase from Psychrobacter cryohalolentis (strain ATCC BAA-1226 / DSM 17306 / VKM B-2378 / K5).